A 120-amino-acid polypeptide reads, in one-letter code: Ribonuclease P protein component (120 aa).

It belongs to the RnpA family. In terms of assembly, consists of a catalytic RNA component (M1 or rnpB) and a protein subunit.

It carries out the reaction Endonucleolytic cleavage of RNA, removing 5'-extranucleotides from tRNA precursor.. Its function is as follows. RNaseP catalyzes the removal of the 5'-leader sequence from pre-tRNA to produce the mature 5'-terminus. It can also cleave other RNA substrates such as 4.5S RNA. The protein component plays an auxiliary but essential role in vivo by binding to the 5'-leader sequence and broadening the substrate specificity of the ribozyme. The polypeptide is Ribonuclease P protein component (Dictyoglomus thermophilum (strain ATCC 35947 / DSM 3960 / H-6-12)).